A 318-amino-acid chain; its full sequence is MMSTLFPALNLNKDEPLPSFTVSELNDWALITMIGADKKSYLQGQVTCDVVSLAQDEITFGGHCDAKGKLWSIFQLFHHNDGYALFQRKSAIETELTEIKKYAVFSKVDISISDEILLGFTGDKALEWINQHTDSNANVRVSKFGTFAKVSDTQWLLVTTDDKKEELLSLLSEATLCDEAIWSLHHIKHALPQIDAPLCNEHIPQALNLQAINGISFKKGCYTGQETVARAKYRGINKRAMYLLSGLSEARPCAGDAIERSVGENWRKGGTIVSAYRFEDGHTLALAILPNDLDEDTQFKLQESIWEKVELPYSLNDE.

Folate-binding residues include Trp28 and Trp182.

It belongs to the tRNA-modifying YgfZ family.

The protein localises to the cytoplasm. Functionally, folate-binding protein involved in regulating the level of ATP-DnaA and in the modification of some tRNAs. It is probably a key factor in regulatory networks that act via tRNA modification, such as initiation of chromosomal replication. The sequence is that of tRNA-modifying protein YgfZ from Aliivibrio fischeri (strain ATCC 700601 / ES114) (Vibrio fischeri).